A 205-amino-acid polypeptide reads, in one-letter code: Potassium-transporting ATPase KdpC subunit (205 aa).

The chain crosses the membrane as a helical span at residues 9–29; the sequence is VFAVLFLFILGFVYPTVTSLI.

This sequence belongs to the KdpC family. In terms of assembly, the system is composed of three essential subunits: KdpA, KdpB and KdpC.

The protein localises to the cell membrane. Functionally, part of the high-affinity ATP-driven potassium transport (or Kdp) system, which catalyzes the hydrolysis of ATP coupled with the electrogenic transport of potassium into the cytoplasm. This subunit acts as a catalytic chaperone that increases the ATP-binding affinity of the ATP-hydrolyzing subunit KdpB by the formation of a transient KdpB/KdpC/ATP ternary complex. The polypeptide is Potassium-transporting ATPase KdpC subunit (Thermoplasma acidophilum (strain ATCC 25905 / DSM 1728 / JCM 9062 / NBRC 15155 / AMRC-C165)).